We begin with the raw amino-acid sequence, 1231 residues long: Cohesin subunit SA-2 (1231 aa).

An N-acetylmethionine modification is found at Met-1. A disordered region spans residues 1–75 (MIAAPEIPTD…GSNRMNGHHQ (75 aa)). Positions 36-48 (KQGKGKTCKKGKK) are enriched in basic residues. The SCD domain occupies 293–378 (FVHRYRDAIA…SRFKDRIVSM (86 aa)). An N6-acetyllysine modification is found at Lys-607. Residues Ser-1058, Ser-1061, Ser-1064, and Ser-1065 each carry the phosphoserine modification. The interval 1062-1087 (GMSSRGSTVRSKKSKPSTGKRKVVEG) is disordered. Basic residues predominate over residues 1071–1082 (RSKKSKPSTGKR). Thr-1112 is modified (phosphothreonine). Ser-1177 and Ser-1178 each carry phosphoserine.

Belongs to the SCC3 family. In terms of assembly, interacts directly with RAD21 in cohesin complex. Cohesin complexes are composed of a heterodimer between a SMC1 protein (SMC1A or SMC1B) and SMC3, which are attached via their hinge domain, and RAD21 which link them at their heads, and one STAG protein (STAG1, STAG2 or STAG3). In cohesin complexes, STAG2 is mutually exclusive with STAG1 and STAG3. Phosphorylated by PLK1. The large dissociation of cohesin from chromosome arms during prophase is partly due to its phosphorylation.

The protein localises to the nucleus. The protein resides in the chromosome. It is found in the centromere. Functionally, component of cohesin complex, a complex required for the cohesion of sister chromatids after DNA replication. The cohesin complex apparently forms a large proteinaceous ring within which sister chromatids can be trapped. At anaphase, the complex is cleaved and dissociates from chromatin, allowing sister chromatids to segregate. The cohesin complex may also play a role in spindle pole assembly during mitosis. The protein is Cohesin subunit SA-2 (Stag2) of Mus musculus (Mouse).